Consider the following 279-residue polypeptide: NADPH-dependent 7-cyano-7-deazaguanine reductase (279 aa).

86–88 (IES) is a binding site for substrate. Residue 88–89 (SK) coordinates NADPH. Catalysis depends on Cys187, which acts as the Thioimide intermediate. Asp194 functions as the Proton donor in the catalytic mechanism. Substrate is bound at residue 226–227 (HE). Position 255–256 (255–256 (RG)) interacts with NADPH.

It belongs to the GTP cyclohydrolase I family. QueF type 2 subfamily. In terms of assembly, homodimer.

The protein resides in the cytoplasm. The catalysed reaction is 7-aminomethyl-7-carbaguanine + 2 NADP(+) = 7-cyano-7-deazaguanine + 2 NADPH + 3 H(+). It functions in the pathway tRNA modification; tRNA-queuosine biosynthesis. In terms of biological role, catalyzes the NADPH-dependent reduction of 7-cyano-7-deazaguanine (preQ0) to 7-aminomethyl-7-deazaguanine (preQ1). The polypeptide is NADPH-dependent 7-cyano-7-deazaguanine reductase (Haemophilus ducreyi (strain 35000HP / ATCC 700724)).